Consider the following 419-residue polypeptide: MKYLIRARLEVDGRVEKHDVIGAIFGQTESLLGSDFSLEELQNKDKLGRIHVELKYQGTKTIGSISVPSNLSRVETAIIAAMLETIDKIGPYPAKITIEEIRDLRLERLEKIKQRARELLRLMKEKEPDIREIIREVLQEEQAKAQVAKLVEYGPERLPAGPGVEKADTIIVVEGRSDVNTLLRYGYTNVIALGGAREKVPETIKRLAEQKKVILFVDGDRGGELILKNVLPQMKVDYVARAPEGREVESLTGREIAQALSQMKPAEIVARELGIEAAEKPAEEAVKREEEAAAEAKPPAPAVQEKAAKPPEEKPPTVKFTIPKAVLEAAKELRGTLEAIVYDKEWRELDRLKVRELYDYISKSEPGRIYAVVFDGIITQRLLDIASEKGVGIIIGNRIGNKITHKPTNVKFLTFSDLF.

Positions aspartate 168–glutamate 244 constitute a Toprim domain. Residues glutamate 174, aspartate 218, and aspartate 220 each contribute to the Mg(2+) site. 2 stretches are compositionally biased toward basic and acidic residues: residues lysine 280–glutamate 291 and lysine 306–proline 316. Residues lysine 280–threonine 317 are disordered.

The protein belongs to the archaeal DnaG primase family. Forms a ternary complex with MCM helicase and DNA. Component of the archaeal exosome complex. Requires Mg(2+) as cofactor.

It catalyses the reaction ssDNA + n NTP = ssDNA/pppN(pN)n-1 hybrid + (n-1) diphosphate.. Its function is as follows. RNA polymerase that catalyzes the synthesis of short RNA molecules used as primers for DNA polymerase during DNA replication. Also part of the exosome, which is a complex involved in RNA degradation. Acts as a poly(A)-binding protein that enhances the interaction between heteromeric, adenine-rich transcripts and the exosome. This Aeropyrum pernix (strain ATCC 700893 / DSM 11879 / JCM 9820 / NBRC 100138 / K1) protein is DNA primase DnaG.